A 510-amino-acid chain; its full sequence is Maturase K (510 aa).

It belongs to the intron maturase 2 family. MatK subfamily.

The protein localises to the plastid. The protein resides in the chloroplast. Its function is as follows. Usually encoded in the trnK tRNA gene intron. Probably assists in splicing its own and other chloroplast group II introns. This is Maturase K from Populus trichocarpa (Western balsam poplar).